Consider the following 707-residue polypeptide: Protein kinase C theta type (707 aa).

The C2 domain maps to methionine 1–leucine 107. Residue tyrosine 90 is modified to Phosphotyrosine; by LCK. The Phorbol-ester/DAG-type 1 zinc-finger motif lies at cysteine 159–cysteine 209. Threonine 219 carries the post-translational modification Phosphothreonine; by autocatalysis. Residues proline 231–cysteine 281 form a Phorbol-ester/DAG-type 2 zinc finger. Serine 348 bears the Phosphoserine mark. A Protein kinase domain is found at phenylalanine 380–phenylalanine 634. Residues leucine 386 to valine 394 and lysine 409 contribute to the ATP site. The Proton acceptor role is filled by aspartate 504. Threonine 538 is modified (phosphothreonine; by PDPK1). The AGC-kinase C-terminal domain maps to arginine 635–cysteine 706. Serine 676 and serine 685 each carry phosphoserine. Residue serine 695 is modified to Phosphoserine; by autocatalysis.

Belongs to the protein kinase superfamily. AGC Ser/Thr protein kinase family. PKC subfamily. As to quaternary structure, part of a membrane raft complex composed at least of BCL10, CARD11, MALT1 and IKBKB. Interacts with GLRX3 (via N-terminus). Interacts with ECT2. Interacts with CCDC88A/GIV; the interaction leads to phosphorylation of CCDC88A and inhibition of its guanine nucleotide exchange factor activity. Interacts with CD28. Mg(2+) is required as a cofactor. In terms of processing, autophosphorylation at Thr-219 is required for targeting to the TCR and cellular function of PRKCQ upon antigen receptor ligation. Following TCR stimulation, phosphorylated at Tyr-90 and Ser-685.

The protein resides in the cytoplasm. It is found in the cell membrane. The catalysed reaction is L-seryl-[protein] + ATP = O-phospho-L-seryl-[protein] + ADP + H(+). The enzyme catalyses L-threonyl-[protein] + ATP = O-phospho-L-threonyl-[protein] + ADP + H(+). Novel PKCs (PRKCD, PRKCE, PRKCH and PRKCQ) are calcium-insensitive, but activated by diacylglycerol (DAG) and phosphatidylserine. Three specific sites; Thr-538 (activation loop of the kinase domain), Ser-676 (turn motif) and Ser-695 (hydrophobic region), need to be phosphorylated for its full activation. Calcium-independent, phospholipid- and diacylglycerol (DAG)-dependent serine/threonine-protein kinase that mediates non-redundant functions in T-cell receptor (TCR) signaling, including T-cells activation, proliferation, differentiation and survival, by mediating activation of multiple transcription factors such as NF-kappa-B, JUN, NFATC1 and NFATC2. In TCR-CD3/CD28-co-stimulated T-cells, is required for the activation of NF-kappa-B and JUN, which in turn are essential for IL2 production, and participates in the calcium-dependent NFATC1 and NFATC2 transactivation. Mediates the activation of the canonical NF-kappa-B pathway (NFKB1) by direct phosphorylation of CARD11 on several serine residues, inducing CARD11 association with lipid rafts and recruitment of the BCL10-MALT1 complex, which then activates IKK complex, resulting in nuclear translocation and activation of NFKB1. May also play an indirect role in activation of the non-canonical NF-kappa-B (NFKB2) pathway. In the signaling pathway leading to JUN activation, acts by phosphorylating the mediator STK39/SPAK and may not act through MAP kinases signaling. Plays a critical role in TCR/CD28-induced NFATC1 and NFATC2 transactivation by participating in the regulation of reduced inositol 1,4,5-trisphosphate generation and intracellular calcium mobilization. After costimulation of T-cells through CD28 can phosphorylate CBLB and is required for the ubiquitination and subsequent degradation of CBLB, which is a prerequisite for the activation of TCR. During T-cells differentiation, plays an important role in the development of T-helper 2 (Th2) cells following immune and inflammatory responses, and, in the development of inflammatory autoimmune diseases, is necessary for the activation of IL17-producing Th17 cells. May play a minor role in Th1 response. Upon TCR stimulation, mediates T-cell protective survival signal by phosphorylating BAD, thus protecting T-cells from BAD-induced apoptosis, and by up-regulating BCL-X(L)/BCL2L1 levels through NF-kappa-B and JUN pathways. In platelets, regulates signal transduction downstream of the ITGA2B, CD36/GP4, F2R/PAR1 and F2RL3/PAR4 receptors, playing a positive role in 'outside-in' signaling and granule secretion signal transduction. May relay signals from the activated ITGA2B receptor by regulating the uncoupling of WASP and WIPF1, thereby permitting the regulation of actin filament nucleation and branching activity of the Arp2/3 complex. May mediate inhibitory effects of free fatty acids on insulin signaling by phosphorylating IRS1, which in turn blocks IRS1 tyrosine phosphorylation and downstream activation of the PI3K/AKT pathway. Phosphorylates MSN (moesin) in the presence of phosphatidylglycerol or phosphatidylinositol. Phosphorylates PDPK1 at 'Ser-504' and 'Ser-532' and negatively regulates its ability to phosphorylate PKB/AKT1. Phosphorylates CCDC88A/GIV and inhibits its guanine nucleotide exchange factor activity. Phosphorylates and activates LRRK1, which phosphorylates RAB proteins involved in intracellular trafficking. This Rattus norvegicus (Rat) protein is Protein kinase C theta type (Prkcq).